The following is a 357-amino-acid chain: MTDLNTLEADVLAQVAAASDLQALDAVRVAAVGKTGSISGLLKTLGAMSPEERKTQGAAINALRDKVQDAITQKKAALEAAELDARLASETLDLSLPAPYRRKGSVHPTMQTMDEVVAIFAEMGFAVAEGPDIEDDFHNFTALNFPEKHPAREMHDTFFFNPKEDGERMLLRTHTSPVQVRTMVSQKPPIRIIAPGRTYRCDNDATHTPVFHQVEGLVIDKGIHMGHLKWTLETFLARFFETDAVTTQFRPHHFPFTEPSAEMDVQCDRSGGEIKIGQGTSWLEILGCGMVHPNVLRACGIDPDEYQGFAFGMGVDRLGMLKYGMPDLRDMWSSDVRWLSHYGFSAFAAPNPASGLS.

Position 258 (glutamate 258) interacts with Mg(2+).

Belongs to the class-II aminoacyl-tRNA synthetase family. Phe-tRNA synthetase alpha subunit type 1 subfamily. In terms of assembly, tetramer of two alpha and two beta subunits. Mg(2+) is required as a cofactor.

Its subcellular location is the cytoplasm. The catalysed reaction is tRNA(Phe) + L-phenylalanine + ATP = L-phenylalanyl-tRNA(Phe) + AMP + diphosphate + H(+). This chain is Phenylalanine--tRNA ligase alpha subunit, found in Caulobacter vibrioides (strain ATCC 19089 / CIP 103742 / CB 15) (Caulobacter crescentus).